The primary structure comprises 475 residues: E3 ubiquitin-protein ligase TRIM62 (475 aa).

Residues 11-54 (CSICLSIYQDPVSLGCEHYFCRRCITEHWVRQEAQGARDCPECR) form an RING-type zinc finger. Residues 88–128 (RAARPCQAHDKVKLFCLTDRALLCFFCDEPALHEQHQVTGI) form a B box-type zinc finger. Positions 93, 96, 114, and 120 each coordinate Zn(2+). A coiled-coil region spans residues 127–241 (GIDDAFDELQ…LQERLAETDR (115 aa)). One can recognise a B30.2/SPRY domain in the interval 277-475 (PLQYTIWKSL…QPLRINTVRI (199 aa)).

It belongs to the TRIM/RBCC family. Interacts with the ubiquitin-conjugating enzyme, UBE2D2. Polyubiquitinated, autoubiquitinated in the presence of UBE2D2.

It localises to the cytoplasm. The catalysed reaction is S-ubiquitinyl-[E2 ubiquitin-conjugating enzyme]-L-cysteine + [acceptor protein]-L-lysine = [E2 ubiquitin-conjugating enzyme]-L-cysteine + N(6)-ubiquitinyl-[acceptor protein]-L-lysine.. Its pathway is protein modification; protein ubiquitination. Functionally, E3 ubiquitin ligase that plays a role in antifungal immunity by mediating 'Lys-27'-linked ubiquitination of CARD9 downstream of C-type lectin receptors; leading to CARD9 activation, followed by activation of NF-kappa-B and MAP kinase p38 pathways. E3 ubiquitin ligase activity is dependent on E2 ubiquitin-conjugating enzyme UBE2D2. This chain is E3 ubiquitin-protein ligase TRIM62, found in Homo sapiens (Human).